Consider the following 141-residue polypeptide: HTH-type transcriptional repressor NsrR (141 aa).

Positions 2–129 constitute an HTH rrf2-type domain; sequence QLTNFTDFGL…DQHTIQDMLT (128 aa). The H-T-H motif DNA-binding region spans 28-51; it reads ITVVTETFDVSRNHMVKIINKLGQ. [2Fe-2S] cluster-binding residues include Cys-91, Cys-96, and Cys-102.

It depends on [2Fe-2S] cluster as a cofactor.

Nitric oxide-sensitive repressor of genes involved in protecting the cell against nitrosative stress. May require iron for activity. The polypeptide is HTH-type transcriptional repressor NsrR (Aliivibrio salmonicida (strain LFI1238) (Vibrio salmonicida (strain LFI1238))).